The primary structure comprises 369 residues: MVINKNLEEQVIDLFYKLGFPKDLFGFIWIITPILTYTLGVTIGISVIVWLERKISAGVQQRIGPEHAGPLGIIQALADGAKLLSKEDIIPSRGDSFLFNVGPVMVVVPVFLSYLVIPLGHGIILADLDIGVFFWIAVSSVAPLGLLTAGYGSNNKYSSLGGLRAAAQSISYEIPLALCVLSVSPLSNSLSTVDIVEAQSKYGFWGWNSWRQPIGFVAFFISSLAECERLPFDLPEAEEELVAGYQTEYSGIKFGLFYVASHPNLLTSSLSATILYLGGWNSPIPFLFLPKFDRLGWNSTDETSEVISITIAIIITLAKAYSFLFISIATRWTLPRVRMDQLLDLGWKSLLPVALGNSLPTASFQLSSP.

The next 5 helical transmembrane spans lie at phenylalanine 25–isoleucine 45, valine 104–isoleucine 124, isoleucine 130–glycine 150, leucine 270–proline 290, and valine 306–isoleucine 326.

Belongs to the complex I subunit 1 family. NDH is composed of at least 16 different subunits, 5 of which are encoded in the nucleus.

Its subcellular location is the plastid. The protein resides in the chloroplast thylakoid membrane. It catalyses the reaction a plastoquinone + NADH + (n+1) H(+)(in) = a plastoquinol + NAD(+) + n H(+)(out). The enzyme catalyses a plastoquinone + NADPH + (n+1) H(+)(in) = a plastoquinol + NADP(+) + n H(+)(out). NDH shuttles electrons from NAD(P)H:plastoquinone, via FMN and iron-sulfur (Fe-S) centers, to quinones in the photosynthetic chain and possibly in a chloroplast respiratory chain. The immediate electron acceptor for the enzyme in this species is believed to be plastoquinone. Couples the redox reaction to proton translocation, and thus conserves the redox energy in a proton gradient. The protein is NAD(P)H-quinone oxidoreductase subunit 1, chloroplastic of Huperzia lucidula (Shining clubmoss).